Reading from the N-terminus, the 335-residue chain is Nucleoid-associated protein Ent638_2782 (335 aa).

This sequence belongs to the YejK family.

It localises to the cytoplasm. It is found in the nucleoid. The polypeptide is Nucleoid-associated protein Ent638_2782 (Enterobacter sp. (strain 638)).